The chain runs to 258 residues: Shikimate dehydrogenase (NADP(+)) (258 aa).

Shikimate contacts are provided by residues 14 to 16 (SES) and T61. K65 acts as the Proton acceptor in catalysis. Residues N86 and D101 each contribute to the shikimate site. Residues 125–129 (GSGGS) and L211 each bind NADP(+). Residue Y213 coordinates shikimate. G234 contacts NADP(+).

It belongs to the shikimate dehydrogenase family. Homodimer.

The catalysed reaction is shikimate + NADP(+) = 3-dehydroshikimate + NADPH + H(+). It functions in the pathway metabolic intermediate biosynthesis; chorismate biosynthesis; chorismate from D-erythrose 4-phosphate and phosphoenolpyruvate: step 4/7. Its function is as follows. Involved in the biosynthesis of the chorismate, which leads to the biosynthesis of aromatic amino acids. Catalyzes the reversible NADPH linked reduction of 3-dehydroshikimate (DHSA) to yield shikimate (SA). The chain is Shikimate dehydrogenase (NADP(+)) from Clostridium botulinum (strain ATCC 19397 / Type A).